The chain runs to 399 residues: Chorismate synthase (399 aa).

NADP(+) contacts are provided by arginine 40 and arginine 46. FMN-binding positions include 134 to 136 (RAS), 255 to 256 (QA), glycine 299, 314 to 318 (KPIST), and arginine 340.

It belongs to the chorismate synthase family. As to quaternary structure, homotetramer. It depends on FMNH2 as a cofactor.

The catalysed reaction is 5-O-(1-carboxyvinyl)-3-phosphoshikimate = chorismate + phosphate. It functions in the pathway metabolic intermediate biosynthesis; chorismate biosynthesis; chorismate from D-erythrose 4-phosphate and phosphoenolpyruvate: step 7/7. Functionally, catalyzes the anti-1,4-elimination of the C-3 phosphate and the C-6 proR hydrogen from 5-enolpyruvylshikimate-3-phosphate (EPSP) to yield chorismate, which is the branch point compound that serves as the starting substrate for the three terminal pathways of aromatic amino acid biosynthesis. This reaction introduces a second double bond into the aromatic ring system. This is Chorismate synthase from Mycolicibacterium smegmatis (strain ATCC 700084 / mc(2)155) (Mycobacterium smegmatis).